We begin with the raw amino-acid sequence, 161 residues long: Ribonuclease H (161 aa).

The RNase H type-1 domain maps to 3–144 (VLKQLSIFTD…CDTLARVAAE (142 aa)). The Mg(2+) site is built by Asp12, Glu50, Asp72, and Asp136.

This sequence belongs to the RNase H family. In terms of assembly, monomer. Mg(2+) is required as a cofactor.

It is found in the cytoplasm. The catalysed reaction is Endonucleolytic cleavage to 5'-phosphomonoester.. Endonuclease that specifically degrades the RNA of RNA-DNA hybrids. This chain is Ribonuclease H, found in Shewanella woodyi (strain ATCC 51908 / MS32).